We begin with the raw amino-acid sequence, 808 residues long: Ribosome biogenesis protein BOP1 homolog (808 aa).

Composition is skewed to low complexity over residues 1–25 (MTSP…LTPC) and 33–50 (ATSS…SSFD). Residues 1-55 (MTSPKGKPSPKRSAPAPATAALTPCAEERTEGATSSASASASSHISSSFDSPRDD) form a disordered region. WD repeat units follow at residues 430 to 469 (GHTA…LMKR), 640 to 680 (KFSE…RRFK), 682 to 720 (SGGV…KPYK), 724 to 766 (SHKG…DYNK), and 777 to 808 (KHQR…AWTE).

This sequence belongs to the WD repeat BOP1/ERB1 family.

The protein localises to the nucleus. The protein resides in the nucleolus. It localises to the nucleoplasm. In terms of biological role, required for maturation of ribosomal RNAs and formation of the large ribosomal subunit. This chain is Ribosome biogenesis protein BOP1 homolog, found in Leishmania major.